The following is a 106-amino-acid chain: HIG1 domain family member 2A, mitochondrial (106 aa).

At Ala-2 the chain carries N-acetylalanine. The 87-residue stretch at 20 to 106 (VIEGLSPTVY…LAVTAMKSRP (87 aa)) folds into the HIG1 domain. The next 2 membrane-spanning stretches (helical) occupy residues 47–67 (PVVP…LYSF) and 83–103 (IAAQ…TAMK). The Mitochondrial matrix portion of the chain corresponds to 104-106 (SRP).

As to quaternary structure, associates with cytochrome c oxidase (COX, complex IV); proposed complex component.

Its subcellular location is the mitochondrion membrane. The protein localises to the mitochondrion inner membrane. Its function is as follows. Proposed subunit of cytochrome c oxidase (COX, complex IV), which is the terminal component of the mitochondrial respiratory chain that catalyzes the reduction of oxygen to water. May be involved in cytochrome c oxidase activity. May play a role in the assembly of respiratory supercomplexes. This is HIG1 domain family member 2A, mitochondrial (HIGD2A) from Homo sapiens (Human).